The primary structure comprises 417 residues: Secreted aspartic protease 4 (417 aa).

A signal peptide spans 1–18 (MFLQNILSVLAFALLIDA). Positions 19 to 75 (APVKRSTGFVTLDFNVKRSLVDPKDPTVEVKRSPLFLDIEPTEIPVDDTGRNDVGKR) are cleaved as a propeptide — activation peptide. Positions 89–403 (YSADITIGSN…DLDDRKISMA (315 aa)) constitute a Peptidase A1 domain. Aspartate 107 is an active-site residue. 107-109 (DTG) lines the pepstatin A pocket. A disulfide bridge links cysteine 122 with cysteine 134. Residue asparagine 137 is glycosylated (N-linked (GlcNAc...) asparagine). Residue 160–161 (AD) participates in pepstatin A binding. Residue aspartate 267 coordinates Zn(2+). The active site involves aspartate 293. 293–297 (DSGTT) contacts pepstatin A. An intrachain disulfide couples cysteine 331 to cysteine 369.

Belongs to the peptidase A1 family. In terms of assembly, monomer.

Its subcellular location is the secreted. It carries out the reaction Preferential cleavage at the carboxyl of hydrophobic amino acids, but fails to cleave 15-Leu-|-Tyr-16, 16-Tyr-|-Leu-17 and 24-Phe-|-Phe-25 of insulin B chain. Activates trypsinogen, and degrades keratin.. Activity is inhibited by squash aspartic peptidase inhibitor (SQAPI). Secreted aspartic peptidases (SAPs) are a group of ten acidic hydrolases considered as key virulence factors. These enzymes supply the fungus with nutrient amino acids as well as are able to degrade the selected host's proteins involved in the immune defense. Moreover, acts toward human hemoglobin though limited proteolysis to generate a variety of antimicrobial hemocidins, enabling to compete with the other microorganisms of the same physiological niche using the microbicidal peptides generated from the host protein. Its function is as follows. Plays a key role in defense against host by cleaving histatin-5 (Hst 5), a peptide from human saliva that carries out fungicidal activity. The cleavage rate decreases in an order of SAP2 &gt; SAP9 &gt; SAP3 &gt; SAP7 &gt; SAP4 &gt; SAP1 &gt; SAP8. The first cleavage occurs between residues 'Lys-17' and 'His-18' of Hst 5, giving DSHAKRHHGYKRKFHEK and HHSHRGY peptides. Simultaneously, the DSHAKRHHGY and KRKFHEKHHSHRGY peptides are also formed. The polypeptide is Secreted aspartic protease 4 (Candida albicans (strain SC5314 / ATCC MYA-2876) (Yeast)).